The following is a 110-amino-acid chain: N(4)-acetylcytidine amidohydrolase (110 aa).

The region spanning 6–93 is the ASCH domain; that stretch reads TFFERFEQDI…IQEIYPGLEQ (88 aa). Residue Lys-20 is the Proton acceptor of the active site. Residue Thr-23 is the Nucleophile of the active site. The Proton donor role is filled by Glu-73.

It belongs to the N(4)-acetylcytidine amidohydrolase family.

It carries out the reaction N(4)-acetylcytidine + H2O = cytidine + acetate + H(+). The enzyme catalyses N(4)-acetyl-2'-deoxycytidine + H2O = 2'-deoxycytidine + acetate + H(+). The catalysed reaction is N(4)-acetylcytosine + H2O = cytosine + acetate + H(+). Its function is as follows. Catalyzes the hydrolysis of N(4)-acetylcytidine (ac4C). The chain is N(4)-acetylcytidine amidohydrolase from Shewanella sp. (strain ANA-3).